A 206-amino-acid polypeptide reads, in one-letter code: Guanylate kinase (206 aa).

The 180-residue stretch at 6–185 (GAILVLSGPS…AAKTLRIIAD (180 aa)) folds into the Guanylate kinase-like domain. 13-20 (GPSGAGKS) is an ATP binding site.

Belongs to the guanylate kinase family.

It is found in the cytoplasm. It carries out the reaction GMP + ATP = GDP + ADP. In terms of biological role, essential for recycling GMP and indirectly, cGMP. This Sulfurimonas denitrificans (strain ATCC 33889 / DSM 1251) (Thiomicrospira denitrificans (strain ATCC 33889 / DSM 1251)) protein is Guanylate kinase.